We begin with the raw amino-acid sequence, 69 residues long: UPF0150 protein AF_1072 (69 aa).

Belongs to the UPF0150 family.

The polypeptide is UPF0150 protein AF_1072 (Archaeoglobus fulgidus (strain ATCC 49558 / DSM 4304 / JCM 9628 / NBRC 100126 / VC-16)).